An 852-amino-acid polypeptide reads, in one-letter code: Aconitate hydratase B (852 aa).

Substrate contacts are provided by residues arginine 194, 237-239 (SSR), 405-407 (QDT), and serine 489. 3 residues coordinate [4Fe-4S] cluster: cysteine 708, cysteine 766, and cysteine 769. Residues arginine 788 and arginine 793 each contribute to the substrate site.

The protein belongs to the aconitase/IPM isomerase family. Monomer. [4Fe-4S] cluster is required as a cofactor.

The enzyme catalyses citrate = D-threo-isocitrate. The catalysed reaction is (2S,3R)-3-hydroxybutane-1,2,3-tricarboxylate = 2-methyl-cis-aconitate + H2O. Its pathway is carbohydrate metabolism; tricarboxylic acid cycle; isocitrate from oxaloacetate: step 2/2. It functions in the pathway organic acid metabolism; propanoate degradation. In terms of biological role, involved in the catabolism of short chain fatty acids (SCFA) via the tricarboxylic acid (TCA)(acetyl degradation route) and probably via the 2-methylcitrate cycle I (propionate degradation route). Catalyzes the reversible isomerization of citrate to isocitrate via cis-aconitate. Catalyzes the hydration of 2-methyl-cis-aconitate to yield (2R,3S)-2-methylisocitrate. The apo form of AcnB functions as a RNA-binding regulatory protein. The sequence is that of Aconitate hydratase B (acnB) from Helicobacter pylori (strain J99 / ATCC 700824) (Campylobacter pylori J99).